The following is a 1371-amino-acid chain: F-actin-uncapping protein LRRC16A (1371 aa).

Met-1 bears the N-acetylmethionine mark. Ser-122 is modified (phosphoserine). LRR repeat units lie at residues Ser-245–Ala-269, Asn-275–Ile-298, Pro-304–Gln-327, Ala-336–Gln-363, Leu-391–Gln-418, Ser-423–Gly-447, Ile-481–Ser-506, Glu-543–Ala-566, Asn-570–Lys-593, and Leu-654–Leu-678. Positions Gly-710–Leu-734 form a coiled coil. Thr-916 carries the post-translational modification Phosphothreonine. Disordered stretches follow at residues Pro-957–Gln-1000, Lys-1036–Gly-1159, and Lys-1172–Val-1371. The LRR 11 repeat unit spans residues Phe-958 to Lys-981. Residues Phe-958 to Arg-1082 are inhibits capping activity of CAPZA2. Ser-968 carries the post-translational modification Phosphoserine. 2 stretches are compositionally biased toward basic and acidic residues: residues Glu-977–Thr-986 and Lys-1036–Lys-1061. Positions Gly-1055–Thr-1089 are necessary for localization at the cell membrane. Ser-1067 and Ser-1094 each carry phosphoserine. 2 stretches are compositionally biased toward basic and acidic residues: residues Cys-1106–Asp-1130 and Glu-1139–Ser-1148. Residues Ala-1190–Ala-1199 are compositionally biased toward polar residues. Thr-1228 carries the post-translational modification Phosphothreonine. Residues Lys-1231–Ser-1243 are compositionally biased toward basic and acidic residues. The segment covering Arg-1244–Ser-1265 has biased composition (low complexity). A phosphoserine mark is found at Ser-1280, Ser-1288, Ser-1291, Ser-1315, Ser-1324, and Ser-1331. A compositionally biased stretch (polar residues) spans Gln-1313–Glu-1326. Basic and acidic residues predominate over residues Gln-1340–Gln-1353. Residue Ser-1360 is modified to Phosphoserine.

Belongs to the CARMIL family. As to quaternary structure, homodimer. Interacts (via C-terminus) with heterodimer capping protein (CP); this interaction uncaps barbed ends capped by CP, enhances barbed-end actin polymerization and promotes lamellipodial formation and cell migration. Interacts with heterodimer capping protein (CP). Interacts with MYO1E. Interacts with TRIO. Expressed in lung, placenta, small intestine, liver, thymus, colon, skeletal muscle, heart and brain. Higher expression in kidney.

It is found in the cytoplasm. It localises to the cytoskeleton. Its subcellular location is the cell membrane. The protein resides in the cell projection. The protein localises to the lamellipodium. Its function is as follows. Cell membrane-cytoskeleton-associated protein that plays a role in the regulation of actin polymerization at the barbed end of actin filaments. Prevents F-actin heterodimeric capping protein (CP) activity at the leading edges of migrating cells, and hence generates uncapped barbed ends and enhances actin polymerization, however, seems unable to nucleate filaments. Plays a role in lamellipodial protrusion formations and cell migration. The polypeptide is F-actin-uncapping protein LRRC16A (Homo sapiens (Human)).